The following is a 427-amino-acid chain: Stemphyloxin II biosynthesis cluster transcription factor sthR (427 aa).

A DNA-binding region (zn(2)-C6 fungal-type) is located at residues 15–45 (CDRCRKQKLRCPPDKDDMGTCGRCLRAGVAC). The interval 51–70 (KPRGRSQKHGISTDGTSHVS) is disordered. Residues 59–69 (HGISTDGTSHV) show a composition bias toward polar residues.

The protein resides in the nucleus. Functionally, transcription factor that regulates the expression of the gene cluster that mediates the biosynthesis of the phytotoxin stemphyloxin II. The polypeptide is Stemphyloxin II biosynthesis cluster transcription factor sthR (Phaeosphaeria nodorum (strain SN15 / ATCC MYA-4574 / FGSC 10173) (Glume blotch fungus)).